The primary structure comprises 257 residues: Large ribosomal subunit protein uL3 (257 aa).

Residues 232-257 (LKAPKKQKTKVETNQVNPKIEEEKTK) form a disordered region.

Belongs to the universal ribosomal protein uL3 family. Part of the 50S ribosomal subunit. Forms a cluster with proteins L14 and L19.

Functionally, one of the primary rRNA binding proteins, it binds directly near the 3'-end of the 23S rRNA, where it nucleates assembly of the 50S subunit. In Mycoplasma genitalium (strain ATCC 33530 / DSM 19775 / NCTC 10195 / G37) (Mycoplasmoides genitalium), this protein is Large ribosomal subunit protein uL3.